The sequence spans 503 residues: MTDKKYIIALDQGTTSSRAVLLDHNANVVEIAQREFTQIYPRAGWVEHNPMEIWATQSSTLNEVVAKSGITSDEIAAIGITNQRETTIVWEKSTGTPVYNAIVWQCRRTADITDKLKADGYEEYIRNTTGLVVDPYFSGTKVKWILDNVEGAREKAERGELLFGTVDTWLVWKLTQGRVHVTDYTNASRTMLFNIHTKQWDDKMLEILNIPRSILPEVRNSSEIYGQTNIGGKGGVRIPVAGIAGDQQAALYGHLCVHAGQAKNTYGTGCFMLLHTGNKAITSKNGLLTTIACNAKGEPEYALEGSVFIAGASIQWLRDELKIVHDSFDSEYFAQKVTDSNGVYVVPAFTGLGAPYWDPYARGAIFGLSRGANCNHIVRATLQSIAYQTRDVLEAMQSDSGERLQYLRVDGGATNNNFLMQFQADILDVNVERPVVKEVTALGAAYLAGLATGFWKDLDELRDKARVERTFSPDSDNEKRERRYKGWKKAVKRSLEWAKEDEE.

Residue Thr-14 participates in ADP binding. Positions 14, 15, and 16 each coordinate ATP. Thr-14 lines the sn-glycerol 3-phosphate pocket. Position 18 (Arg-18) interacts with ADP. 4 residues coordinate sn-glycerol 3-phosphate: Arg-84, Glu-85, Tyr-136, and Asp-246. Residues Arg-84, Glu-85, Tyr-136, Asp-246, and Gln-247 each contribute to the glycerol site. 2 residues coordinate ADP: Thr-268 and Gly-311. ATP contacts are provided by Thr-268, Gly-311, Gln-315, and Gly-412. ADP contacts are provided by Gly-412 and Asn-416.

The protein belongs to the FGGY kinase family.

The enzyme catalyses glycerol + ATP = sn-glycerol 3-phosphate + ADP + H(+). It participates in polyol metabolism; glycerol degradation via glycerol kinase pathway; sn-glycerol 3-phosphate from glycerol: step 1/1. Inhibited by fructose 1,6-bisphosphate (FBP). Key enzyme in the regulation of glycerol uptake and metabolism. Catalyzes the phosphorylation of glycerol to yield sn-glycerol 3-phosphate. The chain is Glycerol kinase from Haemophilus influenzae (strain PittGG).